The primary structure comprises 1134 residues: MDELAFGEAALEQTLAEMCELDTAVLNDIEDMLQLINNQDSDFPGLFDAPYAGGETGDTGPSSPGANSPESFSSASLASSLEAFLGGPKVTPAPLSPPPSAPAALKMYPSVSPFSPGPGIKEEPVPLTILQPAAPQPSPGTLLPPSFPAPPVQLSPAPVLGYSSLPSGFSGTLPGNTQQPPSSLPLAPAPGVLPTPALHTQVQSLASQQPLPASAAPRTNTVTSQVQQVPVVLQPHFIKADSLLLTAVKTDAGATVKTAGISTLAPGTAVQAGPLQTLVSGGTILATVPLVVDTDKLPIHRLAAGSKALGSAQSRGEKRTAHNAIEKRYRSSINDKIVELKDLVVGTEAKLNKSAVLRKAIDYIRFLQHSNQKLKQENLTLRSAHKSKSLKDLVSACGSGGGTDVSMEGMKPEVVETLTPPPSDAGSPSQSSPLSFGSRASSSGGSDSEPDSPAFEDSQVKAQRLPSHSRGMLDRSRLALCVLAFLCLTCNPLASLFGWGILTPSDATGTHRSSGRSMLEAESRDGSNWTQWLLPPLVWLANGLLVLACLALLFVYGEPVTRPHSGPAVHFWRHRKQADLDLARGDFPQAAQQLWLALQALGRPLPTSNLDLACSLLWNLIRHLLQRLWVGRWLAGQAGGLLRDRGLRKDARASARDAAVVYHKLHQLHAMGKYTGGHLAASNLALSALNLAECAGDAISMATLAEIYVAAALRVKTSLPRALHFLTRFFLSSARQACLAQSGSVPLAMQWLCHPVGHRFFVDGDWAVHGAPPESLYSVAGNPVDPLAQVTRLFREHLLERALNCIAQPSPGAADGDREFSDALGYLQLLNSCSDAAGAPACSFSVSSSMAATTGPDPVAKWWASLTAVVIHWLRRDEEAAERLYPLVEHIPQVLQDTERPLPRAALYSFKAARALLDHRKVESSPASLAICEKASGYLRDSLASTPTGSSIDKAMQLLLCDLLLVARTSLWQRQQSPASVQVAHGTSNGPQASALELRGFQHDLSSLRRLAQSFRPAMRRVFLHEATARLMAGASPARTHQLLDRSLRRRAGSSGKGGTTAELEPRPTWREHTEALLLASCYLPPAFLSAPGQRMSMLAEAARTVEKLGDHRLLLDCQQMLLRLGGGTTVTSS.

Residues 1 to 60 form a transcriptional activation (acidic) region; that stretch reads MDELAFGEAALEQTLAEMCELDTAVLNDIEDMLQLINNQDSDFPGLFDAPYAGGETGDTG. The Cytoplasmic segment spans residues 1-477; the sequence is MDELAFGEAA…HSRGMLDRSR (477 aa). The 9aaTAD motif lies at 27-35; the sequence is NDIEDMLQL. Positions 46–73 are disordered; it reads LFDAPYAGGETGDTGPSSPGANSPESFS. Residues 59-69 show a composition bias toward polar residues; it reads TGPSSPGANSP. A phosphoserine mark is found at Ser-96 and Ser-115. Disordered stretches follow at residues 130 to 149 and 170 to 195; these read LQPA…SFPA and SGTL…VLPT. The segment covering 170–179 has biased composition (polar residues); it reads SGTLPGNTQQ. The tract at residues 227–487 is interaction with LMNA; it reads QQVPVVLQPH…LALCVLAFLC (261 aa). Residues 317 to 367 form the bHLH domain; the sequence is EKRTAHNAIEKRYRSSINDKIVELKDLVVGTEAKLNKSAVLRKAIDYIRFL. Phosphoserine; by SIK1 occurs at positions 331 and 332. The tract at residues 367–388 is leucine-zipper; that stretch reads LQHSNQKLKQENLTLRSAHKSK. Position 389 is a phosphoserine; by AMPK (Ser-389). Residue Ser-395 is modified to Phosphoserine; by SIK1. Residues 415-468 form a disordered region; the sequence is VETLTPPPSDAGSPSQSSPLSFGSRASSSGGSDSEPDSPAFEDSQVKAQRLPSH. The segment covering 424-453 has biased composition (low complexity); sequence DAGSPSQSSPLSFGSRASSSGGSDSEPDSP. Ser-448 carries the post-translational modification Phosphoserine. Residues 478–498 form a helical membrane-spanning segment; the sequence is LALCVLAFLCLTCNPLASLFG. Residues 499–536 are Lumenal-facing; sequence WGILTPSDATGTHRSSGRSMLEAESRDGSNWTQWLLPP. Residues 537-557 traverse the membrane as a helical segment; that stretch reads LVWLANGLLVLACLALLFVYG. Over 558 to 1134 the chain is Cytoplasmic; it reads EPVTRPHSGP…LGGGTTVTSS (577 aa). A Phosphoserine modification is found at Ser-1047.

Belongs to the SREBP family. As to quaternary structure, forms a tight complex with SCAP, the SCAP-SREBP complex, in the endoplasmic reticulum membrane and the Golgi apparatus. Interacts with PAQR3; the interaction anchors the SCAP-SREBP complex to the Golgi apparatus in low cholesterol conditions. Efficient DNA binding of the soluble transcription factor fragment requires dimerization with another bHLH protein. Interacts with CEBPA, the interaction produces a transcriptional synergy. Interacts with LMNA. Processed in the Golgi apparatus, releasing the protein from the membrane. At low cholesterol the SCAP-SREBP complex is recruited into COPII vesicles for export from the endoplasmic reticulum. In the Golgi, complex SREBPs are cleaved sequentially by site-1 (MBTPS1, S1P) and site-2 (MBTPS2, S2P) proteases. The first cleavage by site-1 protease occurs within the luminal loop, the second cleavage by site-2 protease occurs within the first transmembrane domain, releasing the transcription factor from the Golgi membrane. In terms of processing, phosphorylated by AMPK, leading to suppress protein processing and nuclear translocation, and repress target gene expression. Phosphorylation at Ser-389 by SIK1 represses activity possibly by inhibiting DNA-binding. Post-translationally, SCAP-free SREBF1 is ubiquitinated by the BCR(ARMC5) complex, leading to its degradation. Ubiquitinated; the nuclear form has a rapid turnover and is rapidly ubiquitinated and degraded by the proteasome in the nucleus. Predominant isoform expressed in most tissues. Predominates in liver, adrenal gland, brain and adipose tissue. Also found in kidney, thymus, testis, muscle, jejunum, and ileum. In terms of tissue distribution, expressed only in select tissues, such as intestinal epithelial, heart, macrophage and bone marrow dendritic cells. Also found in kidney, thymus, testis, muscle, jejunum, and ileum.

It localises to the endoplasmic reticulum membrane. Its subcellular location is the golgi apparatus membrane. The protein resides in the cytoplasmic vesicle. It is found in the COPII-coated vesicle membrane. The protein localises to the nucleus. Activation by cleavage is down-regulated upon activation of SIRT3-dependent PRKAA1/AMPK-alpha signaling cascade which leads to inhibition of ATP-consuming lipogenesis to restore cellular energy balance. Its function is as follows. Precursor of the transcription factor form (Processed sterol regulatory element-binding protein 1), which is embedded in the endoplasmic reticulum membrane. Low sterol concentrations promote processing of this form, releasing the transcription factor form that translocates into the nucleus and activates transcription of genes involved in cholesterol biosynthesis and lipid homeostasis. Functionally, key transcription factor that regulates expression of genes involved in cholesterol biosynthesis and lipid homeostasis. Binds to the sterol regulatory element 1 (SRE-1) (5'-ATCACCCCAC-3'). Has dual sequence specificity binding to both an E-box motif (5'-ATCACGTGA-3') and to SRE-1 (5'-ATCACCCCAC-3'). Regulates the promoters of genes involved in cholesterol biosynthesis and the LDL receptor (LDLR) pathway of sterol regulation. Isoform expressed only in select tissues, which has higher transcriptional activity compared to SREBP-1C. Able to stimulate both lipogenic and cholesterogenic gene expression. Has a role in the nutritional regulation of fatty acids and triglycerides in lipogenic organs such as the liver. Required for innate immune response in macrophages by regulating lipid metabolism. In terms of biological role, predominant isoform expressed in most tissues, which has weaker transcriptional activity compared to isoform SREBP-1A. Primarily controls expression of lipogenic gene. Strongly activates global lipid synthesis in rapidly growing cells. This chain is Sterol regulatory element-binding protein 1, found in Mus musculus (Mouse).